We begin with the raw amino-acid sequence, 458 residues long: Elongation factor 1-alpha (458 aa).

Residue glycine 2 is modified to N,N,N-trimethylglycine. Lysine 3 is subject to N6,N6-dimethyllysine; alternate. Residue lysine 3 is modified to N6-methyllysine; alternate. Residues lysine 5–serine 240 form the tr-type G domain. Residues glycine 14–serine 21 are G1. Residue glycine 14 to serine 21 participates in GTP binding. Lysine 30 is subject to N6-methyllysine. Residues glycine 70–aspartate 74 are G2. Lysine 79 is modified (N6,N6,N6-trimethyllysine). Positions aspartate 91 to glycine 94 are G3. Residues aspartate 91–histidine 95 and asparagine 153–aspartate 156 contribute to the GTP site. The G4 stretch occupies residues asparagine 153–aspartate 156. The interval serine 192 to tryptophan 194 is G5. Lysine 316 is modified (N6,N6-dimethyllysine; alternate). At lysine 316 the chain carries N6-methyllysine; alternate. Lysine 390 is subject to N6-methyllysine.

Belongs to the TRAFAC class translation factor GTPase superfamily. Classic translation factor GTPase family. EF-Tu/EF-1A subfamily.

It localises to the cytoplasm. This protein promotes the GTP-dependent binding of aminoacyl-tRNA to the A-site of ribosomes during protein biosynthesis. The protein is Elongation factor 1-alpha (TEF-2) of Mucor circinelloides f. lusitanicus (Mucor racemosus var. lusitanicus).